A 258-amino-acid chain; its full sequence is Thiazole synthase (258 aa).

Lysine 97 (schiff-base intermediate with DXP) is an active-site residue. 1-deoxy-D-xylulose 5-phosphate-binding positions include glycine 158, 184 to 185 (AG), and 206 to 207 (NT).

The protein belongs to the ThiG family. In terms of assembly, homotetramer. Forms heterodimers with either ThiH or ThiS.

The protein localises to the cytoplasm. It catalyses the reaction [ThiS sulfur-carrier protein]-C-terminal-Gly-aminoethanethioate + 2-iminoacetate + 1-deoxy-D-xylulose 5-phosphate = [ThiS sulfur-carrier protein]-C-terminal Gly-Gly + 2-[(2R,5Z)-2-carboxy-4-methylthiazol-5(2H)-ylidene]ethyl phosphate + 2 H2O + H(+). It participates in cofactor biosynthesis; thiamine diphosphate biosynthesis. In terms of biological role, catalyzes the rearrangement of 1-deoxy-D-xylulose 5-phosphate (DXP) to produce the thiazole phosphate moiety of thiamine. Sulfur is provided by the thiocarboxylate moiety of the carrier protein ThiS. In vitro, sulfur can be provided by H(2)S. The polypeptide is Thiazole synthase (Marinomonas sp. (strain MWYL1)).